Here is a 317-residue protein sequence, read N- to C-terminus: Olfactory receptor 10AD1 (317 aa).

The Extracellular segment spans residues 1–25; that stretch reads MLRNGSIVTEFILVGFQQSSTSTRA. A glycan (N-linked (GlcNAc...) asparagine) is linked at Asn-4. The helical transmembrane segment at 26 to 46 threads the bilayer; it reads LLFALFLALYSLTMAMNGLII. Residues 47-55 are Cytoplasmic-facing; that stretch reads FITSWTDPK. Residues 56–76 traverse the membrane as a helical segment; it reads LNSPMYFFLGHLSLLDVCFIT. Residues 77-100 are Extracellular-facing; the sequence is TTIPQMLIHLVVRDHIVSFVCCMT. A disulfide bond links Cys-98 and Cys-190. Residues 101–121 traverse the membrane as a helical segment; sequence QMYFVFCVGVAECILLAFMAY. Topologically, residues 122–140 are cytoplasmic; sequence DRYVAICYPLNYVPIISQK. A helical transmembrane segment spans residues 141–161; sequence VCVRLVGTAWFFGLINGIFLE. The Extracellular portion of the chain corresponds to 162–198; that stretch reads YISFREPFRRDNHIESFFCEAPIVIGLSCGDPQFSLW. Residues 199 to 218 traverse the membrane as a helical segment; the sequence is AIFADAIVVILSPMVLTVTS. Residues 219-238 are Cytoplasmic-facing; that stretch reads YVHILATILSKASSSGRGKT. A helical membrane pass occupies residues 239-259; the sequence is FSTCASHLTVVIFLYTSAMFS. Residues 260 to 272 are Extracellular-facing; that stretch reads YMNPHSTHGPDKD. A helical membrane pass occupies residues 273-293; sequence KPFSLLYTIITPMCNPIIYSF. Residues 294-317 lie on the Cytoplasmic side of the membrane; it reads RNKEIKEAMVRALGRTRLAQPQSV.

It belongs to the G-protein coupled receptor 1 family.

Its subcellular location is the cell membrane. Odorant receptor. The protein is Olfactory receptor 10AD1 (OR10AD1) of Homo sapiens (Human).